The following is a 455-amino-acid chain: F-box/FBD/LRR-repeat protein At3g51530 (455 aa).

The disordered stretch occupies residues 1–26; it reads MKNSERFSAAKPLMEQGGKSSRKPGF. The 47-residue stretch at 29-75 folds into the F-box domain; sequence EDRISELPEVLLLQILSSLPTKLVISTSVLSKRWLSLWKMVQRLEFE. 6 LRR repeats span residues 80–106, 155–182, 183–208, 227–257, 277–302, and 325–351; these read IYDF…HLKV, ETLK…HLLS, VVYK…VLRR, TLLL…GIES, IRNV…SLDL, and THKV…KLID. An FBD domain is found at 370–417; it reads KWNQPKYVPECLETFMWRNCNWGREEEKEVATYILRNARQLKKATFST.

This Arabidopsis thaliana (Mouse-ear cress) protein is F-box/FBD/LRR-repeat protein At3g51530.